The chain runs to 346 residues: Very-long-chain 3-oxoacyl-CoA reductase (346 aa).

Residues 19–39 (LIYGVLFVGVYKITTFTLSVG) form a helical membrane-spanning segment. NADP(+)-binding residues include valine 65, aspartate 119, asparagine 146, tyrosine 220, lysine 224, valine 253, and serine 255. Tyrosine 220 (proton donor) is an active-site residue. The active-site Lowers pKa of active site Tyr is the lysine 224.

The protein belongs to the short-chain dehydrogenases/reductases (SDR) family.

It localises to the endoplasmic reticulum membrane. The catalysed reaction is a very-long-chain (3R)-3-hydroxyacyl-CoA + NADP(+) = a very-long-chain 3-oxoacyl-CoA + NADPH + H(+). It participates in lipid metabolism; fatty acid biosynthesis. Component of the microsomal membrane bound fatty acid elongation system, which produces the 26-carbon very long-chain fatty acids (VLCFA) from palmitate. Catalyzes the reduction of the 3-ketoacyl-CoA intermediate that is formed in each cycle of fatty acid elongation. VLCFAs serve as precursors for ceramide and sphingolipids. The sequence is that of Very-long-chain 3-oxoacyl-CoA reductase from Debaryomyces hansenii (strain ATCC 36239 / CBS 767 / BCRC 21394 / JCM 1990 / NBRC 0083 / IGC 2968) (Yeast).